A 184-amino-acid chain; its full sequence is Elongation factor P (184 aa).

The protein belongs to the elongation factor P family.

It is found in the cytoplasm. It participates in protein biosynthesis; polypeptide chain elongation. Involved in peptide bond synthesis. Stimulates efficient translation and peptide-bond synthesis on native or reconstituted 70S ribosomes in vitro. Probably functions indirectly by altering the affinity of the ribosome for aminoacyl-tRNA, thus increasing their reactivity as acceptors for peptidyl transferase. The protein is Elongation factor P of Acidovorax ebreus (strain TPSY) (Diaphorobacter sp. (strain TPSY)).